Reading from the N-terminus, the 238-residue chain is MAQQQMTSSQKALMLELKSLQEEPVEGFRITLVDESDLYNWEVAIFGPPNTLYEGGYFKAHIKFPIDYPYSPPTFRFLTKMWHPNIYENGDVCISILHPPVDDPQSGELPSERWNPTQNVRTILLSVISLLNEPNTFSPANVDASVMFRKWRDSKGKDKEYAEIIRKQVSATKAEAEKDGVKVPTTLAEYCIKTKVPSNDNSSDLLYDDLYDDDIDDEDEEEEDADCYDDDDSGNEES.

The region spanning 8–174 is the UBC core domain; that stretch reads SSQKALMLEL…IRKQVSATKA (167 aa). C93 acts as the Glycyl thioester intermediate in catalysis. The important for ubiquitin transfer stretch occupies residues 98–113; the sequence is HPPVDDPQSGELPSER. The interval 194–238 is disordered; that stretch reads TKVPSNDNSSDLLYDDLYDDDIDDEDEEEEDADCYDDDDSGNEES. The segment covering 206–238 has biased composition (acidic residues); the sequence is LYDDLYDDDIDDEDEEEEDADCYDDDDSGNEES. Residue S233 is modified to Phosphoserine; by CK2.

It belongs to the ubiquitin-conjugating enzyme family. Interacts with multiple Cul1-RING E3 ubiquitin-protein ligase complexes, also known as SCF (SKP1-CUL1-F-box protein) complexes, including SCF(FBXW7) and SCF(BTRC). Interacts with multiple Cul2-RING (CRL2) E3 ubiquitin-protein ligase complexes, also known as ECS (Elongin BC-CUL2/5-SOCS-box protein) complexes, including CRL2(FEM1C) and ECS(VHL). When phosphorylated, interacts with beta-TrCP (BTRC).

It catalyses the reaction S-ubiquitinyl-[E1 ubiquitin-activating enzyme]-L-cysteine + [E2 ubiquitin-conjugating enzyme]-L-cysteine = [E1 ubiquitin-activating enzyme]-L-cysteine + S-ubiquitinyl-[E2 ubiquitin-conjugating enzyme]-L-cysteine.. It participates in protein modification; protein ubiquitination. Its activity is regulated as follows. Neddylation of CUL2 in the CRL2(FEM1C) E3 ligase complex increases substrate affinity of UBE2R2 and the ubiquitin-transfer rate in the E2-E3 complex. Functionally, E2 ubiquitin-conjugating enzyme that accepts ubiquitin from an E1 ubiquitin-activating protein, and catalyzes its covalent attachment to other proteins by an E3 ubiquitin-protein ligase complex. In vitro catalyzes monoubiquitination and 'Lys-48'-linked polyubiquitination. Works in collaboration with various Cul1-RING and Cul2-RING E3 ligase complexes. May be involved in degradation of katenin. This chain is Ubiquitin-conjugating enzyme E2 R2 (UBE2R2), found in Homo sapiens (Human).